The sequence spans 475 residues: Ribulose bisphosphate carboxylase large chain (475 aa).

The propeptide occupies 1-2 (MS). N-acetylproline is present on Pro-3. Lys-14 carries the post-translational modification N6,N6,N6-trimethyllysine. Asn-123 and Thr-173 together coordinate substrate. Lys-175 (proton acceptor) is an active-site residue. Residue Lys-177 participates in substrate binding. Residues Lys-201, Asp-203, and Glu-204 each contribute to the Mg(2+) site. Lys-201 carries the post-translational modification N6-carboxylysine. The active-site Proton acceptor is the His-294. Residues Arg-295, His-327, and Ser-379 each coordinate substrate.

The protein belongs to the RuBisCO large chain family. Type I subfamily. As to quaternary structure, heterohexadecamer of 8 large chains and 8 small chains; disulfide-linked. The disulfide link is formed within the large subunit homodimers. It depends on Mg(2+) as a cofactor. In terms of processing, the disulfide bond which can form in the large chain dimeric partners within the hexadecamer appears to be associated with oxidative stress and protein turnover.

The protein localises to the plastid. It localises to the chloroplast. It carries out the reaction 2 (2R)-3-phosphoglycerate + 2 H(+) = D-ribulose 1,5-bisphosphate + CO2 + H2O. The enzyme catalyses D-ribulose 1,5-bisphosphate + O2 = 2-phosphoglycolate + (2R)-3-phosphoglycerate + 2 H(+). Functionally, ruBisCO catalyzes two reactions: the carboxylation of D-ribulose 1,5-bisphosphate, the primary event in carbon dioxide fixation, as well as the oxidative fragmentation of the pentose substrate in the photorespiration process. Both reactions occur simultaneously and in competition at the same active site. In Oenothera argillicola (Appalachian evening primrose), this protein is Ribulose bisphosphate carboxylase large chain.